The primary structure comprises 331 residues: Phosphatidylinositol transfer protein 4 (331 aa).

Belongs to the PtdIns transfer protein family. PI transfer class IIA subfamily.

Functionally, catalyzes the transfer of PtdIns and phosphatidylcholine between membranes. The sequence is that of Phosphatidylinositol transfer protein 4 (pitD) from Dictyostelium discoideum (Social amoeba).